Consider the following 40-residue polypeptide: U2-ctenitoxin-Pr1a (40 aa).

Disulfide bonds link Cys-2–Cys-17, Cys-9–Cys-22, Cys-16–Cys-32, and Cys-24–Cys-30.

Expressed by the venom gland.

The protein localises to the secreted. Neurotoxin. This Phoneutria reidyi (Brazilian Amazonian armed spider) protein is U2-ctenitoxin-Pr1a.